The sequence spans 199 residues: Probable chemoreceptor glutamine deamidase CheD (199 aa).

Belongs to the CheD family.

The enzyme catalyses L-glutaminyl-[protein] + H2O = L-glutamyl-[protein] + NH4(+). Functionally, probably deamidates glutamine residues to glutamate on methyl-accepting chemotaxis receptors (MCPs), playing an important role in chemotaxis. The polypeptide is Probable chemoreceptor glutamine deamidase CheD (Cereibacter sphaeroides (strain ATCC 17029 / ATH 2.4.9) (Rhodobacter sphaeroides)).